The chain runs to 207 residues: Elongation factor 1-beta (207 aa).

Residue Ala2 is modified to N-acetylalanine. Residues 70 to 96 (FPGIPTSASKEEDDDVDLFGSDEEDEE) are disordered. A compositionally biased stretch (acidic residues) spans 80–96 (EEDDDVDLFGSDEEDEE). A Phosphoserine; by CK2 modification is found at Ser90.

It belongs to the EF-1-beta/EF-1-delta family. As to quaternary structure, EF-1 is composed of 4 subunits: alpha, beta, delta, and gamma. Post-translationally, phosphorylation affects the GDP/GTP exchange rate.

In terms of biological role, EF-1-beta and EF-1-delta stimulate the exchange of GDP bound to EF-1-alpha to GTP. The sequence is that of Elongation factor 1-beta from Artemia salina (Brine shrimp).